A 2050-amino-acid polypeptide reads, in one-letter code: Unconventional myosin-XVIIIa (2050 aa).

2 stretches are compositionally biased toward basic and acidic residues: residues 1–17 (MFNLMKKDKDKDGGRKE) and 23–34 (EKKERMSAAELR). A disordered region spans residues 1–34 (MFNLMKKDKDKDGGRKEKKEKKEKKERMSAAELR). A mediates nucleotide-independent binding to F-actin and interaction with GOLPH3 region spans residues 1-398 (MFNLMKKDKD…LDVDEDDIEK (398 aa)). 4 positions are modified to phosphoserine: Ser35, Ser52, Ser72, and Ser74. Phosphothreonine is present on Thr79. Phosphoserine occurs at positions 83 and 98. The residue at position 99 (Thr99) is a Phosphothreonine. Phosphoserine is present on residues Ser102 and Ser103. The Interaction with actin motif lies at 114–118 (RGSVL). A phosphoserine mark is found at Ser140, Ser145, Ser157, Ser160, Ser164, Ser234, and Ile340. The interval 140–167 (SFSQRSRDESASETSTPSEHSAAPSPQV) is disordered. The PDZ domain occupies 220–311 (ELELQRRPTG…SVRLKVQPIP (92 aa)). A Myosin N-terminal SH3-like domain is found at 349 to 401 (TEKVWLVHRDGFSLASQLKSEELSLPEGKARVKLDHDGAILDVDEDDIEKANA). One can recognise a Myosin motor domain in the interval 405 to 1181 (DRLEDLASLV…TLARLEEQRD (777 aa)). 498 to 505 (GSSGSGKT) lines the ATP pocket. Ser983, Ser1063, Ser1064, and Ser1066 each carry phosphoserine. Residues 1051–1071 (PGEPRSASSRRVSSSSELDLP) are disordered. Residues 1055–1066 (RSASSRRVSSSS) show a composition bias toward low complexity. An IQ domain is found at 1184-1213 (TSRHLTLFQAACRGYLARQHFKKRKIQDLA). Positions 1242-1967 (LIQVQLSEEQ…KKNKLEGDSD (726 aa)) form a coiled coil. A disordered region spans residues 1448-1477 (RNHELEKKQRRFDSELSQAHEETQREKLQR). Ser1636 bears the Phosphoserine mark. The interval 1848–1897 (MEKLTEERDQRAAAENREKEQNKRLQRQLRDTKEEMSELARKEAEASRKK) is disordered. Residues Ser1938, Ser1966, Ser1970, Ser1994, Ser1998, Ser2002, Ser2003, Ser2016, Ser2032, Ser2037, and Ser2039 each carry the phosphoserine modification. A disordered region spans residues 1955-2050 (YQKKKNKLEG…TEAKLTETSA (96 aa)). Thr2041 bears the Phosphothreonine mark. Over residues 2041–2050 (TEAKLTETSA) the composition is skewed to basic and acidic residues.

The protein belongs to the TRAFAC class myosin-kinesin ATPase superfamily. Myosin family. Homodimer. Forms a tripartite complex with CDC42BPA/CDC42BPB and LURAP1 with the latter acting as an adapter connecting CDC42BPA/CDC42BPB and MYO18A. Binds F-actin; regulated by ADP and GOLPH3. Interacts with GOLPH3; the interaction is direct and may link Golgi membranes to the actin cytoskeleton. Interacts with JAK3. Interacts with MSR1 and CD14. In terms of processing, phosphorylated on tyrosine upon CSF1R activation. Isoform 6 is phosphorylated on Ser-340. Isoform 1; Expressed ubiquitously. Isoform 2: Specifically expressed in most hematopoietic cells. Isoform 3: Predominantly expressed in alveolar macrophages.

It is found in the golgi apparatus. The protein resides in the trans-Golgi network. It localises to the golgi outpost. The protein localises to the cytoplasm. Its subcellular location is the cytoskeleton. It is found in the microtubule organizing center. The protein resides in the endoplasmic reticulum-Golgi intermediate compartment. Functionally, may link Golgi membranes to the cytoskeleton and participate in the tensile force required for vesicle budding from the Golgi. Thereby, may play a role in Golgi membrane trafficking and could indirectly give its flattened shape to the Golgi apparatus. Alternatively, in concert with LURAP1 and CDC42BPA/CDC42BPB, has been involved in modulating lamellar actomyosin retrograde flow that is crucial to cell protrusion and migration. May be involved in the maintenance of the stromal cell architectures required for cell to cell contact. Regulates trafficking, expression, and activation of innate immune receptors on macrophages. Plays a role to suppress inflammatory responsiveness of macrophages via a mechanism that modulates CD14 trafficking. Acts as a receptor of surfactant-associated protein A (SFTPA1/SP-A) and plays an important role in internalization and clearance of SFTPA1-opsonized S.aureus by alveolar macrophages. Strongly enhances natural killer cell cytotoxicity. The polypeptide is Unconventional myosin-XVIIIa (Myo18a) (Mus musculus (Mouse)).